Here is a 364-residue protein sequence, read N- to C-terminus: Developmentally-regulated GTP-binding protein 2 (364 aa).

A (3S)-3-hydroxylysine modification is found at lysine 21. Residues 63–288 enclose the OBG-type G domain; it reads ARVALIGFPS…LLEMLWEYLA (226 aa). GTP is bound by residues 69-76, 94-98, 115-118, 246-249, and 269-271; these read GFPSVGKS, FTTLT, DLPG, NKID, and SCG. Positions 76 and 96 each coordinate Mg(2+). In terms of domain architecture, TGS spans 288–363; the sequence is ALTCIYTKKR…EHEDVIQIVK (76 aa).

The protein belongs to the TRAFAC class OBG-HflX-like GTPase superfamily. OBG GTPase family. As to quaternary structure, interacts with RWDD1; this interaction confers protection to polyubiquitination and proteolytic degradation. Interacts with JMJD7; this interaction is direct. The cofactor is Mg(2+). In terms of processing, polyubiquitinated. Post-translationally, hydroxylated (with S stereochemistry) at C-3 of Lys-21 by JMJD7. As to expression, fairly high levels in liver, heart, kidney, and brain. Very low levels in lung, spleen, testis and skeletal muscle.

The protein resides in the nucleus. The protein localises to the cytoplasm. The catalysed reaction is GTP + H2O = GDP + phosphate + H(+). Catalyzes the conversion of GTP to GDP through hydrolysis of the gamma-phosphate bond in GTP. When hydroxylated at C-3 of 'Lys-21' by JMJD7, may bind to RNA and play a role in translation. This is Developmentally-regulated GTP-binding protein 2 (Drg2) from Mus musculus (Mouse).